We begin with the raw amino-acid sequence, 88 residues long: Small ribosomal subunit protein uS15c (88 aa).

Belongs to the universal ribosomal protein uS15 family. Part of the 30S ribosomal subunit.

The protein localises to the plastid. It localises to the chloroplast. The polypeptide is Small ribosomal subunit protein uS15c (rps15) (Aethionema cordifolium (Lebanon stonecress)).